The sequence spans 118 residues: Large ribosomal subunit protein uL18 (118 aa).

Belongs to the universal ribosomal protein uL18 family. In terms of assembly, part of the 50S ribosomal subunit; part of the 5S rRNA/L5/L18/L25 subcomplex. Contacts the 5S and 23S rRNAs.

Its function is as follows. This is one of the proteins that bind and probably mediate the attachment of the 5S RNA into the large ribosomal subunit, where it forms part of the central protuberance. This chain is Large ribosomal subunit protein uL18, found in Campylobacter lari (strain RM2100 / D67 / ATCC BAA-1060).